Here is a 109-residue protein sequence, read N- to C-terminus: COX assembly mitochondrial protein 2 (109 aa).

Positions 10–54 constitute a CHCH domain; that stretch reads FHSCLDFINALDKCHQKEYYKRIFGLCNNEKDALNKCLKEASLNN. 2 consecutive short sequence motifs (cx9C motif) follow at residues 13–23 and 36–46; these read CLDFINALDKC and CNNEKDALNKC. Disulfide bonds link Cys13/Cys46 and Cys23/Cys36.

Belongs to the CMC family. As to quaternary structure, interacts with CMC1.

Its subcellular location is the mitochondrion inner membrane. The protein localises to the mitochondrion intermembrane space. Required for mitochondrial cytochrome c oxidase (COX) assembly and respiration. May be involved in copper trafficking and distribution to mitochondrial COX and SOD1. The sequence is that of COX assembly mitochondrial protein 2 (CMC2) from Saccharomyces cerevisiae (strain ATCC 204508 / S288c) (Baker's yeast).